The following is a 252-amino-acid chain: Phosphatidylserine decarboxylase proenzyme (252 aa).

S211 (schiff-base intermediate with substrate; via pyruvic acid) is an active-site residue. S211 is subject to Pyruvic acid (Ser); by autocatalysis.

The protein belongs to the phosphatidylserine decarboxylase family. PSD-A subfamily. Heterodimer of a large membrane-associated beta subunit and a small pyruvoyl-containing alpha subunit. It depends on pyruvate as a cofactor. Post-translationally, is synthesized initially as an inactive proenzyme. Formation of the active enzyme involves a self-maturation process in which the active site pyruvoyl group is generated from an internal serine residue via an autocatalytic post-translational modification. Two non-identical subunits are generated from the proenzyme in this reaction, and the pyruvate is formed at the N-terminus of the alpha chain, which is derived from the carboxyl end of the proenzyme. The post-translation cleavage follows an unusual pathway, termed non-hydrolytic serinolysis, in which the side chain hydroxyl group of the serine supplies its oxygen atom to form the C-terminus of the beta chain, while the remainder of the serine residue undergoes an oxidative deamination to produce ammonia and the pyruvoyl prosthetic group on the alpha chain.

The protein resides in the cell membrane. It catalyses the reaction a 1,2-diacyl-sn-glycero-3-phospho-L-serine + H(+) = a 1,2-diacyl-sn-glycero-3-phosphoethanolamine + CO2. Its pathway is phospholipid metabolism; phosphatidylethanolamine biosynthesis; phosphatidylethanolamine from CDP-diacylglycerol: step 2/2. In terms of biological role, catalyzes the formation of phosphatidylethanolamine (PtdEtn) from phosphatidylserine (PtdSer). The protein is Phosphatidylserine decarboxylase proenzyme of Novosphingobium aromaticivorans (strain ATCC 700278 / DSM 12444 / CCUG 56034 / CIP 105152 / NBRC 16084 / F199).